A 119-amino-acid polypeptide reads, in one-letter code: Large ribosomal subunit protein bL20 (119 aa).

This sequence belongs to the bacterial ribosomal protein bL20 family.

Binds directly to 23S ribosomal RNA and is necessary for the in vitro assembly process of the 50S ribosomal subunit. It is not involved in the protein synthesizing functions of that subunit. This chain is Large ribosomal subunit protein bL20, found in Nitrosomonas europaea (strain ATCC 19718 / CIP 103999 / KCTC 2705 / NBRC 14298).